Reading from the N-terminus, the 655-residue chain is Cyclomaltodextrin glucanotransferase (655 aa).

The first 30 residues, 1 to 30 (MKRNRFFNTSAAIAISIALNTFFCSMQTIA), serve as a signal peptide directing secretion. Ca(2+) is bound by residues Asp-55, Asn-60, Asn-61, Gly-79, and Asp-81. 123 to 124 (YW) provides a ligand contact to substrate. Asn-164 serves as a coordination point for Ca(2+). Substrate is bound by residues His-165 and 217–220 (NLFN). Asp-223 serves as a coordination point for Ca(2+). Residue Arg-251 coordinates substrate. Asp-253 serves as the catalytic Nucleophile. 256–257 (KH) is a binding site for substrate. A Ca(2+)-binding site is contributed by His-257. The active-site Proton donor is the Glu-287. The substrate site is built by His-362, Asp-436, and Arg-440. The region spanning 554-655 (AENPTVQSIN…NDTQTTNGSF (102 aa)) is the CBM20 domain. A disordered region spans residues 630–655 (TANVEWQSGANNQFNSNDTQTTNGSF).

This sequence belongs to the glycosyl hydrolase 13 family. Monomer. The cofactor is Ca(2+).

It catalyses the reaction Cyclizes part of a (1-&gt;4)-alpha-D-glucan chain by formation of a (1-&gt;4)-alpha-D-glucosidic bond.. In Klebsiella oxytoca, this protein is Cyclomaltodextrin glucanotransferase (cgt).